A 757-amino-acid polypeptide reads, in one-letter code: RNA cytosine C(5)-methyltransferase NSUN2 (757 aa).

The segment at 1-35 (MGRRARGRRFQQPPQPEGEEDASDGGRKRGQAGWE) is disordered. Serine 23 is modified (phosphoserine). Lysine 46 participates in a covalent cross-link: Glycyl lysine isopeptide (Lys-Gly) (interchain with G-Cter in SUMO2). Position 139 is a phosphoserine; by AURKB (serine 139). S-adenosyl-L-methionine is bound by residues 184 to 190 (CAAPGSK), aspartate 215, aspartate 242, and aspartate 268. Cysteine 321 functions as the Nucleophile in the catalytic mechanism. The disordered stretch occupies residues 436-504 (NKRQPKVQNK…EKKDGVCGPP (69 aa)). 2 positions are modified to phosphoserine: serine 456 and serine 473. Residues 463-476 (GNPSDQSELESQMI) show a composition bias toward polar residues. Glycyl lysine isopeptide (Lys-Gly) (interchain with G-Cter in SUMO2) cross-links involve residues lysine 510 and lysine 515. The residue at position 585 (lysine 585) is an N6-acetyllysine; alternate. N6-malonyllysine; alternate is present on lysine 585. Lysine 585 participates in a covalent cross-link: Glycyl lysine isopeptide (Lys-Gly) (interchain with G-Cter in SUMO2); alternate. Serine 592 bears the Phosphoserine mark. Residues lysine 639, lysine 653, and lysine 659 each participate in a glycyl lysine isopeptide (Lys-Gly) (interchain with G-Cter in SUMO2) cross-link. The interval 716–757 (LTNENAASPEQPGDEDAKQTAQDPCVPDSVPGCDAAAAEPSR) is disordered. At threonine 717 the chain carries Phosphothreonine. Position 723 is a phosphoserine (serine 723).

The protein belongs to the class I-like SAM-binding methyltransferase superfamily. RsmB/NOP family. TRM4 subfamily. Interacts with NPM1 and NCL during interphase; interaction is disrupted following phosphorylation at Ser-139. In terms of processing, phosphorylated at Ser-139 by AURKB during mitosis, leading to abolish methyltransferase activity and the interaction with NPM1. In terms of tissue distribution, ubiquitously expressed at low level. Up-regulated in tumors. Dynamically expressed during morphogenesis and in adult skin: in adult skin, expression is up-regulated in the bulge and hair germ as soon as the hair follicle enters its growing phase (anagen). During anagen, expressed at highest level in cells of the hair germ that give rise to the hair matrix.

The protein resides in the nucleus. It is found in the nucleolus. The protein localises to the cytoplasm. Its subcellular location is the mitochondrion. It localises to the cytoskeleton. The protein resides in the spindle. It is found in the secreted. The protein localises to the extracellular exosome. It catalyses the reaction cytidine(48) in tRNA + S-adenosyl-L-methionine = 5-methylcytidine(48) in tRNA + S-adenosyl-L-homocysteine + H(+). It carries out the reaction cytidine(49) in tRNA + S-adenosyl-L-methionine = 5-methylcytidine(49) in tRNA + S-adenosyl-L-homocysteine + H(+). The enzyme catalyses cytidine(50) in tRNA + S-adenosyl-L-methionine = 5-methylcytidine(50) in tRNA + S-adenosyl-L-homocysteine + H(+). The catalysed reaction is cytidine(34) in tRNA precursor + S-adenosyl-L-methionine = 5-methylcytidine(34) in tRNA precursor + S-adenosyl-L-homocysteine + H(+). It catalyses the reaction a cytidine in mRNA + S-adenosyl-L-methionine = a 5-methylcytidine in mRNA + S-adenosyl-L-homocysteine + H(+). With respect to regulation, inhibited by magnesium ions. In terms of biological role, RNA cytosine C(5)-methyltransferase that methylates cytosine to 5-methylcytosine (m5C) in various RNAs, such as tRNAs, mRNAs and some long non-coding RNAs (lncRNAs). Involved in various processes, such as epidermal stem cell differentiation, testis differentiation and maternal to zygotic transition during early development: acts by increasing protein synthesis; cytosine C(5)-methylation promoting tRNA stability and preventing mRNA decay. Methylates cytosine to 5-methylcytosine (m5C) at positions 34 and 48 of intron-containing tRNA(Leu)(CAA) precursors, and at positions 48, 49 and 50 of tRNA(Gly)(GCC) precursors. tRNA methylation is required generation of RNA fragments derived from tRNAs (tRFs). Also mediates C(5)-methylation of mitochondrial tRNAs. Catalyzes cytosine C(5)-methylation of mRNAs, leading to stabilize them and prevent mRNA decay: mRNA stabilization involves YBX1 that specifically recognizes and binds m5C-modified transcripts. Cytosine C(5)-methylation of mRNAs also regulates mRNA export: methylated transcripts are specifically recognized by THOC4/ALYREF, which mediates mRNA nucleo-cytoplasmic shuttling. Also mediates cytosine C(5)-methylation of non-coding RNAs, such as vault RNAs (vtRNAs), promoting their processing into regulatory small RNAs. Cytosine C(5)-methylation of vtRNA VTRNA1.1 promotes its processing into small-vault RNA4 (svRNA4) and regulates epidermal differentiation. May act downstream of Myc to regulate epidermal cell growth and proliferation. Required for proper spindle assembly and chromosome segregation, independently of its methyltransferase activity. The chain is RNA cytosine C(5)-methyltransferase NSUN2 from Mus musculus (Mouse).